A 164-amino-acid chain; its full sequence is Neurotrophin-3 (164 aa).

The first 3 residues, 1-3 (IQS), serve as a signal peptide directing secretion. A propeptide spanning residues 4 to 120 (TNMDQQGSLT…ALNRTSRRKR (117 aa)) is cleaved from the precursor. Asn-113 carries N-linked (GlcNAc...) asparagine glycosylation.

Belongs to the NGF-beta family.

It localises to the secreted. In terms of biological role, seems to promote the survival of visceral and proprioceptive sensory neurons. This chain is Neurotrophin-3 (NTF3), found in Sanzinia madagascariensis (Madagascar tree boa).